The chain runs to 348 residues: Flagellar P-ring protein (348 aa).

Residues 1–16 form the signal peptide; it reads MRVLTIFLLFMTSIFA.

The protein belongs to the FlgI family. In terms of assembly, the basal body constitutes a major portion of the flagellar organelle and consists of four rings (L,P,S, and M) mounted on a central rod.

It localises to the periplasm. The protein resides in the bacterial flagellum basal body. Assembles around the rod to form the L-ring and probably protects the motor/basal body from shearing forces during rotation. The protein is Flagellar P-ring protein of Campylobacter jejuni subsp. doylei (strain ATCC BAA-1458 / RM4099 / 269.97).